The sequence spans 305 residues: uncharacterized protein (305 aa).

The signal sequence occupies residues 1-29; it reads MKKWFSSISKKKVSFSTLLLLGSGIVLSS. Cys-30 carries N-palmitoyl cysteine lipidation. Cys-30 carries S-diacylglycerol cysteine lipidation. Residues 234–265 are disordered; it reads FYNPDNSNGSNAPGSNQPNQDSGNNGSTTPAA. Positions 237–258 are enriched in polar residues; that stretch reads PDNSNGSNAPGSNQPNQDSGNN.

It is found in the cell membrane. This is an uncharacterized protein from Mycoplasma pneumoniae (strain ATCC 29342 / M129 / Subtype 1) (Mycoplasmoides pneumoniae).